Reading from the N-terminus, the 396-residue chain is Argininosuccinate synthase (396 aa).

Alanine 9–serine 17 is an ATP binding site. Residue tyrosine 85 participates in L-citrulline binding. Glycine 115 provides a ligand contact to ATP. L-aspartate is bound by residues threonine 117, asparagine 121, and aspartate 122. Asparagine 121 is an L-citrulline binding site. L-citrulline contacts are provided by arginine 125, serine 173, glutamate 258, and tyrosine 270.

The protein belongs to the argininosuccinate synthase family. Type 1 subfamily. In terms of assembly, homotetramer.

The protein localises to the cytoplasm. The enzyme catalyses L-citrulline + L-aspartate + ATP = 2-(N(omega)-L-arginino)succinate + AMP + diphosphate + H(+). Its pathway is amino-acid biosynthesis; L-arginine biosynthesis; L-arginine from L-ornithine and carbamoyl phosphate: step 2/3. The sequence is that of Argininosuccinate synthase from Streptococcus agalactiae serotype Ia (strain ATCC 27591 / A909 / CDC SS700).